The chain runs to 324 residues: Aspartate carbamoyltransferase catalytic subunit (324 aa).

Carbamoyl phosphate is bound by residues arginine 55 and threonine 56. Lysine 83 serves as a coordination point for L-aspartate. Carbamoyl phosphate contacts are provided by arginine 105, histidine 135, and glutamine 138. Residues arginine 173 and arginine 227 each coordinate L-aspartate. Residues glycine 268 and proline 269 each coordinate carbamoyl phosphate.

The protein belongs to the aspartate/ornithine carbamoyltransferase superfamily. ATCase family. As to quaternary structure, heterododecamer (2C3:3R2) of six catalytic PyrB chains organized as two trimers (C3), and six regulatory PyrI chains organized as three dimers (R2).

It catalyses the reaction carbamoyl phosphate + L-aspartate = N-carbamoyl-L-aspartate + phosphate + H(+). It participates in pyrimidine metabolism; UMP biosynthesis via de novo pathway; (S)-dihydroorotate from bicarbonate: step 2/3. In terms of biological role, catalyzes the condensation of carbamoyl phosphate and aspartate to form carbamoyl aspartate and inorganic phosphate, the committed step in the de novo pyrimidine nucleotide biosynthesis pathway. This Nocardioides sp. (strain ATCC BAA-499 / JS614) protein is Aspartate carbamoyltransferase catalytic subunit.